The sequence spans 65 residues: Large ribosomal subunit protein bL35 (65 aa).

Composition is skewed to basic residues over residues 1–15 (MPKM…KRFT) and 26–44 (QAFK…KRQL). A disordered region spans residues 1–65 (MPKMKTKKSA…KSVRAMMPYA (65 aa)).

It belongs to the bacterial ribosomal protein bL35 family.

The chain is Large ribosomal subunit protein bL35 from Cupriavidus metallidurans (strain ATCC 43123 / DSM 2839 / NBRC 102507 / CH34) (Ralstonia metallidurans).